A 193-amino-acid chain; its full sequence is 7-methyl-GTP pyrophosphatase (193 aa).

D70 serves as the catalytic Proton acceptor.

This sequence belongs to the Maf family. YceF subfamily. Requires a divalent metal cation as cofactor.

The protein resides in the cytoplasm. It catalyses the reaction N(7)-methyl-GTP + H2O = N(7)-methyl-GMP + diphosphate + H(+). Its function is as follows. Nucleoside triphosphate pyrophosphatase that hydrolyzes 7-methyl-GTP (m(7)GTP). May have a dual role in cell division arrest and in preventing the incorporation of modified nucleotides into cellular nucleic acids. This Photobacterium profundum (strain SS9) protein is 7-methyl-GTP pyrophosphatase.